The sequence spans 353 residues: MTDRFQQLLASIKPVDMNLTSTVKAHLDDLTKPQGSLGRLEEIVMKYCIATGTTKPSLSKKKVFCFAGDHGVAAEGVSAFPAEVTPQMVYNMLGGGAAINVLSRHAGADLEVVDMGVNHDFAEHPMLRRCKVKHGSANMAEGPAMSIEETLQAIMAGAELAIEARNQGYELLATGEMGIANTTPATALYATLLGLPVEAITGRGTGIDDERLHHKVAVIEKAIEVNRANLATPLEVLAALGGFEIAGICGLILGAASVGMPVVVDGFISSSAAVCAIKLSCTVSDYLFFSHLSNEQGHRAVMQKLGARPILDLDLRLGEGTGAAMAMQVIEASVKIYNEMATFSSAGVSGKND.

The active-site Proton acceptor is Glu-319.

This sequence belongs to the CobT family.

The enzyme catalyses 5,6-dimethylbenzimidazole + nicotinate beta-D-ribonucleotide = alpha-ribazole 5'-phosphate + nicotinate + H(+). It functions in the pathway nucleoside biosynthesis; alpha-ribazole biosynthesis; alpha-ribazole from 5,6-dimethylbenzimidazole: step 1/2. In terms of biological role, catalyzes the synthesis of alpha-ribazole-5'-phosphate from nicotinate mononucleotide (NAMN) and 5,6-dimethylbenzimidazole (DMB). This is Nicotinate-nucleotide--dimethylbenzimidazole phosphoribosyltransferase from Chlorobaculum tepidum (strain ATCC 49652 / DSM 12025 / NBRC 103806 / TLS) (Chlorobium tepidum).